Here is a 165-residue protein sequence, read N- to C-terminus: Neurotrophin-3 (165 aa).

A signal peptide spans 1–3; it reads IQS. Residues 4–119 constitute a propeptide that is removed on maturation; sequence TSMDQGSLSE…VLNRTSRRKR (116 aa). A glycan (N-linked (GlcNAc...) asparagine) is linked at N112.

It belongs to the NGF-beta family.

The protein resides in the secreted. Functionally, seems to promote the survival of visceral and proprioceptive sensory neurons. The sequence is that of Neurotrophin-3 (NTF3) from Anilius scytale (Coral cylinder snake).